A 584-amino-acid polypeptide reads, in one-letter code: Interferon regulatory factor 2-binding protein 1 (584 aa).

The segment at 59–120 is disordered; sequence HVLPEGRSPG…RYDRATSSSR (62 aa). A Phosphoserine modification is found at S66. A compositionally biased stretch (low complexity) spans 82–100; it reads STGSQGSQLPPPQAQAQPS. Residue S125 is modified to Phosphoserine. R177 carries the post-translational modification Omega-N-methylarginine. The residue at position 186 (S186) is a Phosphoserine. Positions 197-217 form a coiled coil; the sequence is EKEKQQRNADCLAELNEAMRG. K227 participates in a covalent cross-link: Glycyl lysine isopeptide (Lys-Gly) (interchain with G-Cter in SUMO2). 2 disordered regions span residues 346–421 and 433–495; these read PAEA…GVPS and LGHS…GTGA. Residues 354–369 are compositionally biased toward pro residues; the sequence is YPEPAPAALCGPPPRA. A phosphoserine mark is found at S371, S384, S421, and S436. A Glycyl lysine isopeptide (Lys-Gly) (interchain with G-Cter in SUMO2) cross-link involves residue K438. Residues 449–458 show a composition bias toward low complexity; the sequence is AGGASPAASS. 2 positions are modified to phosphoserine: S453 and S457. The RING-type; degenerate zinc finger occupies 503–550; it reads CTLCRERLEDTHFVQCPSVPGHKFCFPCSREFIKAQGPAGEVYCPSGD. Positions 503-550 are cys-rich; sequence CTLCRERLEDTHFVQCPSVPGHKFCFPCSREFIKAQGPAGEVYCPSGD.

Belongs to the IRF2BP family. As to quaternary structure, interacts with IRF2. Part of a corepressor complex containing IRF2 and IRF2BP2. Interacts with JDP2.

It localises to the nucleus. The enzyme catalyses S-ubiquitinyl-[E2 ubiquitin-conjugating enzyme]-L-cysteine + [acceptor protein]-L-lysine = [E2 ubiquitin-conjugating enzyme]-L-cysteine + N(6)-ubiquitinyl-[acceptor protein]-L-lysine.. Its function is as follows. Acts as a transcriptional corepressor in a IRF2-dependent manner; this repression is not mediated by histone deacetylase activities. May act as an E3 ligase towards JDP2, enhancing its polyubiquitination. Represses ATF2-dependent transcriptional activation. The chain is Interferon regulatory factor 2-binding protein 1 (Irf2bp1) from Mus musculus (Mouse).